Consider the following 270-residue polypeptide: Phosphatidate cytidylyltransferase (270 aa).

Helical transmembrane passes span 17–37 (FVVL…AILI), 55–75 (FFYV…FEEP), 81–101 (ILFI…SQVF), 104–124 (VAAF…FLPI), 129–149 (GAAN…FAYF), 170–190 (EGVI…RLVV), 193–213 (LLSV…TVAI), and 248–268 (IDGL…LEGV).

The protein belongs to the CDS family.

It localises to the cell membrane. It carries out the reaction a 1,2-diacyl-sn-glycero-3-phosphate + CTP + H(+) = a CDP-1,2-diacyl-sn-glycerol + diphosphate. The protein operates within phospholipid metabolism; CDP-diacylglycerol biosynthesis; CDP-diacylglycerol from sn-glycerol 3-phosphate: step 3/3. This Thermotoga maritima (strain ATCC 43589 / DSM 3109 / JCM 10099 / NBRC 100826 / MSB8) protein is Phosphatidate cytidylyltransferase (cdsA).